The primary structure comprises 365 residues: tRNA-specific 2-thiouridylase MnmA (365 aa).

ATP contacts are provided by residues 6–13 (AMSGGVDS) and L32. C101 acts as the Nucleophile in catalysis. A disulfide bridge links C101 with C199. ATP is bound at residue G125. The interval 149–151 (KDQ) is interaction with tRNA. C199 functions as the Cysteine persulfide intermediate in the catalytic mechanism.

The protein belongs to the MnmA/TRMU family.

It localises to the cytoplasm. It catalyses the reaction S-sulfanyl-L-cysteinyl-[protein] + uridine(34) in tRNA + AH2 + ATP = 2-thiouridine(34) in tRNA + L-cysteinyl-[protein] + A + AMP + diphosphate + H(+). Functionally, catalyzes the 2-thiolation of uridine at the wobble position (U34) of tRNA, leading to the formation of s(2)U34. The polypeptide is tRNA-specific 2-thiouridylase MnmA (Corynebacterium glutamicum (strain R)).